The sequence spans 308 residues: CASP-like protein 4A2 (308 aa).

Residues 1–135 form a disordered region; the sequence is MALEAQPSPS…APAPAPRVPA (135 aa). Over 1–161 the chain is Cytoplasmic; sequence MALEAQPSPS…KRPTAVLQRT (161 aa). Residues 22 to 31 show a composition bias toward gly residues; the sequence is GGAGAPGGSA. Positions 32-44 are enriched in low complexity; it reads GDADAQARRATSG. 2 stretches are compositionally biased toward pro residues: residues 54-65 and 89-132; these read RRSPPPPFPRTP and FQPP…PAPR. The chain crosses the membrane as a helical span at residues 162–182; the sequence is ALVARVAAALLCLAALAVLAA. Over 183-203 the chain is Extracellular; that stretch reads DSRKGFALDSYSNYSQLRYSE. An N-linked (GlcNAc...) asparagine glycan is attached at Asn-195. Residues 204–224 traverse the membrane as a helical segment; that stretch reads AVNVIGFVYSVLQFFVLADLM. Topologically, residues 225-240 are cytoplasmic; the sequence is RRNKHLNPRRKGDYFD. The helical transmembrane segment at 241 to 262 threads the bilayer; it reads FFMDQVLAYLLISSSSSATARV. The Extracellular portion of the chain corresponds to 263–280; that stretch reads GDWIDNWGSDPFPKMANS. Asn-279 carries N-linked (GlcNAc...) asparagine glycosylation. A helical transmembrane segment spans residues 281–301; it reads SIAISFMAFLVFAISALISAY. The Cytoplasmic segment spans residues 302–308; the sequence is NLFRRDI.

This sequence belongs to the Casparian strip membrane proteins (CASP) family. Homodimer and heterodimers.

Its subcellular location is the cell membrane. This is CASP-like protein 4A2 from Oryza sativa subsp. japonica (Rice).